We begin with the raw amino-acid sequence, 548 residues long: Glucose-6-phosphate isomerase (548 aa).

Glu354 serves as the catalytic Proton donor. Catalysis depends on residues His385 and Lys513.

This sequence belongs to the GPI family.

It is found in the cytoplasm. The enzyme catalyses alpha-D-glucose 6-phosphate = beta-D-fructose 6-phosphate. Its pathway is carbohydrate biosynthesis; gluconeogenesis. The protein operates within carbohydrate degradation; glycolysis; D-glyceraldehyde 3-phosphate and glycerone phosphate from D-glucose: step 2/4. Functionally, catalyzes the reversible isomerization of glucose-6-phosphate to fructose-6-phosphate. The chain is Glucose-6-phosphate isomerase from Marinomonas sp. (strain MWYL1).